We begin with the raw amino-acid sequence, 1037 residues long: Ras guanine nucleotide exchange factor E (1037 aa).

Residues 5-35 (ECNNRIEYLQNKVLELESLNENLKGQLEYFQ) are a coiled coil. 8 disordered regions span residues 65 to 100 (NNNN…TTNN), 114 to 150 (TNSN…ELSN), 166 to 387 (TTTT…PLSN), 414 to 437 (TVNM…LYHS), 451 to 472 (SSLS…LTNP), 602 to 628 (INSN…NQLE), 907 to 935 (NTTT…QQLN), and 1004 to 1037 (EKET…SFKS). 2 stretches are compositionally biased toward low complexity: residues 114 to 145 (TNSN…NNSN) and 166 to 200 (TTTT…NNNN). Residues 229 to 239 (PTSSRNSPTNK) are compositionally biased toward polar residues. Over residues 240-276 (SSPQFLSPLSKSPLSQSTQSTTVSSPSPSWTTTVPQS) the composition is skewed to low complexity. Over residues 282 to 300 (TIVQSKSPYSPDTNISNKL) the composition is skewed to polar residues. Low complexity predominate over residues 318 to 360 (SPSKNSPRSLNSNNNNSSATTSITTPPTTSTPTPTTSTTTTTT). A compositionally biased stretch (basic and acidic residues) spans 361 to 370 (TERRPEDRRS). 2 stretches are compositionally biased toward polar residues: residues 372-387 (TSPF…PLSN) and 424-437 (PRSN…LYHS). One can recognise an N-terminal Ras-GEF domain in the interval 496–694 (NGFIVKGGTI…NLKRLLTNDR (199 aa)). The Ras-GEF domain occupies 726–1003 (DPTEIARQLT…YKLSLICEPK (278 aa)). The span at 907 to 930 (NTTTTTTTTTTTTTTNTTTSNNNN) shows a compositional bias: low complexity. The span at 1027–1037 (SVTSLLNSFKS) shows a compositional bias: polar residues.

Functionally, promotes the exchange of Ras-bound GDP by GTP. Seems to play a role in chemotaxis. The sequence is that of Ras guanine nucleotide exchange factor E (gefE) from Dictyostelium discoideum (Social amoeba).